Consider the following 282-residue polypeptide: DNA processing protein DprA (282 aa).

Belongs to the DprA/Smf family. In terms of assembly, homodimer; forms tail-to-tail dimers, forms nucleoprotein complex (NPC) which requires at least 30 nucleotides (nt) of ssDNA becoming optimal with 50 nt. Interacts with RecA, forms mixed DprA-RecA-ssDNA filaments. Interacts with ComFA and ComFC.

The protein localises to the cytoplasm. Its function is as follows. Protein that helps load RecA onto ssDNA during transformation. Required for DNA transformation. Not required for DNA uptake but for a later stage of transformation. Thought to interact at the cell pole with newly imported transforming ssDNA which it binds cooperatively, protecting linear and circular ssDNA from nuclease action. Forms bridges between DNA segments. Favors the loading of RecA onto ssDNA and formation of RecA-DNA filaments, triggering RecA-catalysis of ATP-driven homologous DNA pairing. The chain is DNA processing protein DprA from Streptococcus pneumoniae (strain ATCC BAA-255 / R6).